Consider the following 78-residue polypeptide: Protein GPR15LG (78 aa).

The first 24 residues, 1 to 24 (MRLLALSGLLCMLLLCFCIFSSEG), serve as a signal peptide directing secretion. Intrachain disulfides connect C37–C60 and C38–C57.

As to quaternary structure, interacts with SUSD2; the interaction is direct. In terms of tissue distribution, highly abundant in the testis, colon, eye, and tongue. Detected in the epithelial layer of the colon, but not the small intestine.

The protein localises to the secreted. Functionally, highly cationic protein that has multiple functions. Acts as a chemotactic factor that mediates lymphocytes recruitment to epithelia through binding and activation of the G-protein coupled receptor GPR15. May be a tumor suppressor; together with SUSD2 has a growth inhibitory effect on colon cancer cells which includes G1 cell cycle arrest. May regulate keratinocyte proliferation. In addition, through activation of Mas-related G protein-coupled receptors (MRGPRs) contributes to pruritogenesis by activating itch-selective sensory neurons and mast cells degranulation. Its function is as follows. Has antimicrobial activity against Gram-positive bacteria, including Staphylococcus aureus and Actinomyces spec., and Mycoplasma hominis and lentivirus. The polypeptide is Protein GPR15LG (Gpr15lg) (Mus musculus (Mouse)).